Here is a 133-residue protein sequence, read N- to C-terminus: U6 snRNA-associated Sm-like protein LSm1 (133 aa).

The Sm domain occupies 5-80; that stretch reads PGTASLIEDI…VVLLGEIDLE (76 aa). Position 123 is a phosphoserine (Ser-123). Thr-129 is modified (phosphothreonine).

This sequence belongs to the snRNP Sm proteins family. Interacts with SLBP; interaction with SLBP occurs when histone mRNA is being rapidly degraded during the S phase. LSm subunits form a heteromer with a donut shape.

The protein localises to the cytoplasm. It localises to the P-body. In terms of biological role, plays a role in the degradation of histone mRNAs, the only eukaryotic mRNAs that are not polyadenylated. Probably also part of an LSm subunits-containing complex involved in the general process of mRNA degradation. The sequence is that of U6 snRNA-associated Sm-like protein LSm1 (LSM1) from Homo sapiens (Human).